Consider the following 156-residue polypeptide: Small ribosomal subunit protein uS7 (156 aa).

It belongs to the universal ribosomal protein uS7 family. Part of the 30S ribosomal subunit. Contacts proteins S9 and S11.

Its function is as follows. One of the primary rRNA binding proteins, it binds directly to 16S rRNA where it nucleates assembly of the head domain of the 30S subunit. Is located at the subunit interface close to the decoding center, probably blocks exit of the E-site tRNA. This is Small ribosomal subunit protein uS7 from Anaeromyxobacter dehalogenans (strain 2CP-C).